The primary structure comprises 360 residues: GDSL esterase/lipase At1g58430 (360 aa).

Positions 1-23 (MWTSKTISFTLFITTTLLGSCNA) are cleaved as a signal peptide. N-linked (GlcNAc...) asparagine glycosylation is present at Asn22. Catalysis depends on Ser42, which acts as the Nucleophile. Asn104 and Asn326 each carry an N-linked (GlcNAc...) asparagine glycan. Active-site residues include Asp334 and His337.

Belongs to the 'GDSL' lipolytic enzyme family.

It is found in the secreted. This is GDSL esterase/lipase At1g58430 from Arabidopsis thaliana (Mouse-ear cress).